The primary structure comprises 196 residues: GTP cyclohydrolase-2 (196 aa).

Position 49–53 (49–53 (RVHSE)) interacts with GTP. Residues Cys54, Cys65, and Cys67 each coordinate Zn(2+). Residues Gln70, 92–94 (EGR), and Thr114 contribute to the GTP site. Asp126 serves as the catalytic Proton acceptor. Arg128 (nucleophile) is an active-site residue. GTP is bound by residues Thr149 and Lys154.

It belongs to the GTP cyclohydrolase II family. Homodimer. It depends on Zn(2+) as a cofactor.

The enzyme catalyses GTP + 4 H2O = 2,5-diamino-6-hydroxy-4-(5-phosphoribosylamino)-pyrimidine + formate + 2 phosphate + 3 H(+). The protein operates within cofactor biosynthesis; riboflavin biosynthesis; 5-amino-6-(D-ribitylamino)uracil from GTP: step 1/4. Catalyzes the conversion of GTP to 2,5-diamino-6-ribosylamino-4(3H)-pyrimidinone 5'-phosphate (DARP), formate and pyrophosphate. The chain is GTP cyclohydrolase-2 from Escherichia coli O127:H6 (strain E2348/69 / EPEC).